Here is a 358-residue protein sequence, read N- to C-terminus: MPAVLSSVLSNITDFVVHEGNGVKGLADMGLEALPKQYVQPEEERITTSTVIVDDTIPVIDLSEWGSDPKVGDMICEAAEKWGFFQIVNHGVPLEVLEEVKAATYRFFRLPAEEKNKHCKDNSPSNNVRYGTSFTPHAEKALEWKDFLSLFYVSDEEAAALWPSACRDEALTFMRNCDAVIKRLLKSLMKGLNVTEIDGTKESLLMGSKRINMNYYPKCPNPELTVGVGRHSDVSTLTILLQDQIGGLYVRKLDSDTWVHVPPINGAIVINVGDALQILSNGRYKSIEHRVIANGSNNRISVPIFVNPRPNDIIGPLPELLESGEKAVYKNVLYSDYVKHFFRKAHDGKETVDFAKIN.

A Fe2OG dioxygenase domain is found at 200-308 (TKESLLMGSK…RISVPIFVNP (109 aa)). Residue Tyr-216 coordinates 2-oxoglutarate. His-231, Asp-233, and His-289 together coordinate Fe cation. 2-oxoglutarate is bound by residues Arg-299 and Ser-301.

Belongs to the iron/ascorbate-dependent oxidoreductase family. L-ascorbate is required as a cofactor. Fe(2+) serves as cofactor. In terms of tissue distribution, expressed at low levels in tubers, underground stems, leaves and petioles.

The catalysed reaction is (E)-feruloyl-CoA + 2-oxoglutarate + O2 = (E)-6-hydroxyferuloyl-CoA + succinate + CO2. It participates in phenylpropanoid metabolism. 2-oxoglutarate (OG)- and Fe(II)-dependent dioxygenase (2OGD) involved in scopoletin biosynthesis. Converts feruloyl CoA into 6'-hydroxyferuloyl CoA, and, at low efficiency, caffeoyl-CoA into 6'-hydroxycaffeate, but has no activity with p-coumaroyl-CoA. The chain is Feruloyl CoA ortho-hydroxylase F6H1-2 from Ipomoea batatas (Sweet potato).